Here is a 244-residue protein sequence, read N- to C-terminus: MSMSMGVRGLALRSVSKTLFSQGVRCPSMVIGARYMSSTPEKQTDPKAKANSIINAIPGNNILTKTGVLGTSAAAVIYAISNELYVINDESILLLTFLGFTGLVAKYLAPAYKDFADARMKKVSDVLNASRNKHVEAVKDRIDSVSQLQNVAETTKVLFDVSKETVELESEAFELKQKVELAHEAKAVLDSWVRYEASLRQLEQRQLAKSVISRVQSELGNPKFQEKVLQQSISEIEQLLSKLK.

The transit peptide at 1–35 (MSMSMGVRGLALRSVSKTLFSQGVRCPSMVIGARY) directs the protein to the mitochondrion. Serine 144 is modified (phosphoserine).

This sequence belongs to the eukaryotic ATPase B chain family. In terms of assembly, F-type ATPases have 2 components, CF(1) - the catalytic core - and CF(0) - the membrane proton channel. In yeast, the dimeric form of ATP synthase consists of 17 polypeptides: alpha, beta, gamma, delta, epsilon, 4 (B), 5 (OSCP), 6 (A), 8, 9 (C), d, E (Tim11), f, g, h, i/j and k.

Its subcellular location is the mitochondrion. It is found in the mitochondrion inner membrane. Mitochondrial membrane ATP synthase (F(1)F(0) ATP synthase or Complex V) produces ATP from ADP in the presence of a proton gradient across the membrane which is generated by electron transport complexes of the respiratory chain. F-type ATPases consist of two structural domains, F(1) - containing the extramembraneous catalytic core, and F(0) - containing the membrane proton channel, linked together by a central stalk and a peripheral stalk. During catalysis, ATP synthesis in the catalytic domain of F(1) is coupled via a rotary mechanism of the central stalk subunits to proton translocation. Part of the complex F(0) domain and the peripheric stalk, which acts as a stator to hold the catalytic alpha(3)beta(3) subcomplex and subunit a/ATP6 static relative to the rotary elements. This is ATP synthase subunit 4, mitochondrial (ATP4) from Saccharomyces cerevisiae (strain ATCC 204508 / S288c) (Baker's yeast).